A 200-amino-acid chain; its full sequence is dITP/XTP pyrophosphatase (200 aa).

Residue 8-13 participates in substrate binding; that stretch reads TGNQGK. Aspartate 69 (proton acceptor) is an active-site residue. Mg(2+) is bound at residue aspartate 69. Substrate-binding positions include serine 70, 154–157, lysine 177, and 182–183; these read FGYD and HR.

Belongs to the HAM1 NTPase family. In terms of assembly, homodimer. It depends on Mg(2+) as a cofactor.

It carries out the reaction XTP + H2O = XMP + diphosphate + H(+). It catalyses the reaction dITP + H2O = dIMP + diphosphate + H(+). The catalysed reaction is ITP + H2O = IMP + diphosphate + H(+). Pyrophosphatase that catalyzes the hydrolysis of nucleoside triphosphates to their monophosphate derivatives, with a high preference for the non-canonical purine nucleotides XTP (xanthosine triphosphate), dITP (deoxyinosine triphosphate) and ITP. Seems to function as a house-cleaning enzyme that removes non-canonical purine nucleotides from the nucleotide pool, thus preventing their incorporation into DNA/RNA and avoiding chromosomal lesions. The sequence is that of dITP/XTP pyrophosphatase from Vibrio vulnificus (strain CMCP6).